A 72-amino-acid chain; its full sequence is NAD(P)H-quinone oxidoreductase subunit O (72 aa).

This sequence belongs to the complex I NdhO subunit family. As to quaternary structure, NDH-1 can be composed of about 15 different subunits; different subcomplexes with different compositions have been identified which probably have different functions.

The protein resides in the cellular thylakoid membrane. The catalysed reaction is a plastoquinone + NADH + (n+1) H(+)(in) = a plastoquinol + NAD(+) + n H(+)(out). It catalyses the reaction a plastoquinone + NADPH + (n+1) H(+)(in) = a plastoquinol + NADP(+) + n H(+)(out). In terms of biological role, NDH-1 shuttles electrons from an unknown electron donor, via FMN and iron-sulfur (Fe-S) centers, to quinones in the respiratory and/or the photosynthetic chain. The immediate electron acceptor for the enzyme in this species is believed to be plastoquinone. Couples the redox reaction to proton translocation, and thus conserves the redox energy in a proton gradient. Cyanobacterial NDH-1 also plays a role in inorganic carbon-concentration. This is NAD(P)H-quinone oxidoreductase subunit O from Gloeothece citriformis (strain PCC 7424) (Cyanothece sp. (strain PCC 7424)).